The chain runs to 224 residues: Menaquinol:cytochrome c reductase cytochrome b subunit (224 aa).

Residues 37-57 traverse the membrane as a helical segment; sequence FSAFVYCFGGLTFFVTVIQVL. A heme b-binding site is contributed by Tyr-42. Cys-43 contributes to the heme c binding site. Heme b contacts are provided by Arg-91, His-94, His-108, and Arg-111. 3 helical membrane-spanning segments follow: residues 96–116, 126–146, and 195–215; these read WGAS…FFQG, WIVG…GYLL, and IHVF…FIMI. Positions 196 and 211 each coordinate heme b. Arg-216 and Ile-220 together coordinate heme c. Ser-221 lines the heme b pocket.

This sequence belongs to the cytochrome b family. As to quaternary structure, the main subunits of the menaquinol:cytochrome c complex are a Rieske-type iron-sulfur protein (QcrA), a cytochrome b (QcrB) and a cytochrome c (QcrC). Heme b is required as a cofactor. Heme c serves as cofactor.

It localises to the cell membrane. Component of the menaquinol:cytochrome c reductase complex. This chain is Menaquinol:cytochrome c reductase cytochrome b subunit, found in Bacillus subtilis (strain 168).